Here is a 708-residue protein sequence, read N- to C-terminus: Ion-translocating oxidoreductase complex subunit C (708 aa).

4Fe-4S ferredoxin-type domains are found at residues 369 to 397 and 407 to 436; these read GEPQ…QQLY and KATT…VQYF. [4Fe-4S] cluster is bound by residues Cys-377, Cys-380, Cys-383, Cys-387, Cys-416, Cys-419, Cys-422, and Cys-426. The disordered stretch occupies residues 663-684; the sequence is KARKLEQQQTNAEPEEQVDPRK.

Belongs to the 4Fe4S bacterial-type ferredoxin family. RnfC subfamily. The complex is composed of six subunits: RsxA, RsxB, RsxC, RsxD, RsxE and RsxG. It depends on [4Fe-4S] cluster as a cofactor.

Its subcellular location is the cell inner membrane. Functionally, part of a membrane-bound complex that couples electron transfer with translocation of ions across the membrane. Required to maintain the reduced state of SoxR. The protein is Ion-translocating oxidoreductase complex subunit C of Shigella boydii serotype 18 (strain CDC 3083-94 / BS512).